The primary structure comprises 155 residues: Protein-export protein SecB (155 aa).

This sequence belongs to the SecB family. Homotetramer, a dimer of dimers. One homotetramer interacts with 1 SecA dimer.

It localises to the cytoplasm. In terms of biological role, one of the proteins required for the normal export of preproteins out of the cell cytoplasm. It is a molecular chaperone that binds to a subset of precursor proteins, maintaining them in a translocation-competent state. It also specifically binds to its receptor SecA. The chain is Protein-export protein SecB from Albidiferax ferrireducens (strain ATCC BAA-621 / DSM 15236 / T118) (Rhodoferax ferrireducens).